Consider the following 874-residue polypeptide: MSTPTFSVADIRKTFLDFFAAKGHTVVASSPLVPGNDPTLMFTNSGMVQFKDVFLGTDKRPYVRATSVQTCLRAGGKHNDLENVGYTARHHTFFEMLGNWSFGDYFKRESLKWAWELLTEVYKLPPERLLATVYAEDDEAYDIWTKEIGLPPERVIRIGDNKGGRYKSDNFWMMADTGPCGPCSEIFYDHGEHIAGGPPGSPDEDGDRFIEIWNNVFMQFDMDEQGNVKPLPAPCVDTGMGLERLAAILQHVHSNYEIDLFDALIKAAARETGTSDLTNPSLKVIADHIRATAFLVADGVIPSNEGRGYVQRRIVRRAIRHGYKLGRKTPFFHKLVQDLVQQMGDAYPKIREQQARITDVLRVEEERFFETLAHGMEILDSALAGGAKTLPGDVAFKLHDTYGFPLDLTNDVCRERGVNVDEAGFATAMEHQKSTARAAGKFKMDRALEYTGAANQFTGYEQLAESAKIVALYVDGTSTAALHAGQSGVVVLDRTPFYAESGGQVGDQGTIGAGSACFTVADTQKIKADVYGHHGTLEAGTLNVGDTVQAQVDLQLRAATMRNHSVTHLMHKALREVLGDHVQQKGSLVNAERTRFDFAHNAPLTAAQIREIERLVNAEVLANTDTNARLMDIESAQKTGAMMLFGEKYGETVRVLDIGTSRELCGGTHVRRTGDIGLFKVVAEGGVAAGVRRIEAVTGENALAYLQSLESTVDQAAAALKAPPAELTARIGGALDQIKTLEKELAALKGKLASSQGDELAGQAVDVKGIKVLAARLEGADAKTLRETMDKLKDKLKTAAIVLAAVDGDKVQLAAGVTADSIGRVKAGDLVNFVAAQVGGKGGGKPDMAMAGGTNAAALPQALAAVQGWVGERI.

Histidine 564, histidine 568, cysteine 665, and histidine 669 together coordinate Zn(2+).

Belongs to the class-II aminoacyl-tRNA synthetase family. Zn(2+) serves as cofactor.

The protein resides in the cytoplasm. The enzyme catalyses tRNA(Ala) + L-alanine + ATP = L-alanyl-tRNA(Ala) + AMP + diphosphate. Catalyzes the attachment of alanine to tRNA(Ala) in a two-step reaction: alanine is first activated by ATP to form Ala-AMP and then transferred to the acceptor end of tRNA(Ala). Also edits incorrectly charged Ser-tRNA(Ala) and Gly-tRNA(Ala) via its editing domain. This Acidovorax sp. (strain JS42) protein is Alanine--tRNA ligase.